Reading from the N-terminus, the 119-residue chain is V-type proton ATPase subunit F (119 aa).

This sequence belongs to the V-ATPase F subunit family. As to quaternary structure, V-ATPase is a heteromultimeric enzyme made up of two complexes: the ATP-hydrolytic V1 complex and the proton translocation V0 complex. The V1 complex consists of three catalytic AB heterodimers that form a heterohexamer, three peripheral stalks each consisting of EG heterodimers, one central rotor including subunits D and F, and the regulatory subunits C and H. The proton translocation complex V0 consists of the proton transport subunit a, a ring of proteolipid subunits c9c'', rotary subunit d, subunits e and f, and the accessory subunits ATP6AP1/Ac45 and ATP6AP2/PRR.

It is found in the cytoplasmic vesicle. The protein resides in the secretory vesicle. Its subcellular location is the synaptic vesicle membrane. It localises to the clathrin-coated vesicle membrane. Its function is as follows. Subunit of the V1 complex of vacuolar(H+)-ATPase (V-ATPase), a multisubunit enzyme composed of a peripheral complex (V1) that hydrolyzes ATP and a membrane integral complex (V0) that translocates protons. V-ATPase is responsible for acidifying and maintaining the pH of intracellular compartments and in some cell types, is targeted to the plasma membrane, where it is responsible for acidifying the extracellular environment. The chain is V-type proton ATPase subunit F (Atp6v1f) from Mus musculus (Mouse).